Reading from the N-terminus, the 423-residue chain is MLWRNEITEFMDQLSKYSQEILKTFKQLRPSEYKQYNEFLTQVTPLLQKTPEKIPELVDHIFNYLDNVEKICELLVNASSIIISSKIREQVKHGMSFSYKADLDSLADILSQKQYVLMHLSKNIAAQYFNTCLNQGKSKLDLKAASVFYSSRPRTASSAELYRKMLYAYGSPQEINYYTEKARNKTLDVEENDSMAIIERTARHNLSLMHPLEAMGLTFGATNTDADPEDLKDKTVINLTLPQATESITYHLKSLMQLKKVSTASGLNTNILKAFDNIISTPVKKNKMASKLAPGMDVVFTSDNGKTFFTKNILSKNMLAGPKERVFAYNNLISNLNNSCFIQNHNDFLRQQDSWPFYDAHNFTNKFLMQPIFSGQTRPRLQGAMEAAHVETHLTAFLQSIQPSRPQDPSVLASPKLSALILN.

The protein belongs to the asfivirus E423R family.

It is found in the virion. This is an uncharacterized protein from African swine fever virus (isolate Tick/South Africa/Pretoriuskop Pr4/1996) (ASFV).